A 926-amino-acid polypeptide reads, in one-letter code: Alanine--tRNA ligase (926 aa).

Zn(2+) contacts are provided by histidine 615, histidine 619, cysteine 719, and histidine 723. The interval 887–910 is disordered; it reads RVGGGGGGPPDFAQGGGPDADALD. Gly residues predominate over residues 888–904; sequence VGGGGGGPPDFAQGGGP.

Belongs to the class-II aminoacyl-tRNA synthetase family. Zn(2+) is required as a cofactor.

The protein resides in the cytoplasm. The catalysed reaction is tRNA(Ala) + L-alanine + ATP = L-alanyl-tRNA(Ala) + AMP + diphosphate. In terms of biological role, catalyzes the attachment of alanine to tRNA(Ala) in a two-step reaction: alanine is first activated by ATP to form Ala-AMP and then transferred to the acceptor end of tRNA(Ala). Also edits incorrectly charged Ser-tRNA(Ala) and Gly-tRNA(Ala) via its editing domain. In Halorubrum lacusprofundi (strain ATCC 49239 / DSM 5036 / JCM 8891 / ACAM 34), this protein is Alanine--tRNA ligase.